Here is a 219-residue protein sequence, read N- to C-terminus: UPF0502 protein Gmet_0262 (219 aa).

The protein belongs to the UPF0502 family.

In Geobacter metallireducens (strain ATCC 53774 / DSM 7210 / GS-15), this protein is UPF0502 protein Gmet_0262.